The chain runs to 217 residues: Ribonuclease HII (217 aa).

Residues 27-216 enclose the RNase H type-2 domain; it reads SQVAGVDEAG…VKESIQEGVC (190 aa). Residues Asp33, Glu34, and Asp126 each contribute to the a divalent metal cation site.

The protein belongs to the RNase HII family. Mn(2+) serves as cofactor. The cofactor is Mg(2+).

Its subcellular location is the cytoplasm. The enzyme catalyses Endonucleolytic cleavage to 5'-phosphomonoester.. In terms of biological role, endonuclease that specifically degrades the RNA of RNA-DNA hybrids. The polypeptide is Ribonuclease HII (Chlamydia trachomatis serovar L2 (strain ATCC VR-902B / DSM 19102 / 434/Bu)).